Here is a 175-residue protein sequence, read N- to C-terminus: 2-oxo-4-hydroxy-4-carboxy-5-ureidoimidazoline decarboxylase (175 aa).

Catalysis depends on histidine 67, which acts as the Proton donor. Substrate-binding positions include proline 68, 84 to 88 (SRGEQ), and 119 to 123 (FVICA). Residues 173 to 175 (TKL) carry the Microbody targeting signal motif.

This sequence belongs to the OHCU decarboxylase family. Homodimer.

The protein localises to the peroxisome. The catalysed reaction is 5-hydroxy-2-oxo-4-ureido-2,5-dihydro-1H-imidazole-5-carboxylate + H(+) = (S)-allantoin + CO2. Its pathway is purine metabolism; urate degradation; (S)-allantoin from urate: step 3/3. Its function is as follows. Catalyzes the stereoselective decarboxylation of 2-oxo-4-hydroxy-4-carboxy-5-ureidoimidazoline (OHCU) to (S)-allantoin. The sequence is that of 2-oxo-4-hydroxy-4-carboxy-5-ureidoimidazoline decarboxylase (urad) from Amia calva (Bowfin).